We begin with the raw amino-acid sequence, 286 residues long: MLRRKLGLYLALIRWNRPAGWLLLLWPTLSALWVASHGFPGWHLLTVFTLGTILMRSAGCCVNDVADRDFDRHVKRTAQRPVTSGQVSVREALVLGAVLALLAFGLVLTTNAATIAWSFAALAVTLAYPFAKRYVSMPQAVLGVAFSFGIPMAFAAVQSRVPLLAWVLLLGNLCWVIAYDTEYAMVDRDDDLKIGMKTSAITLGRFDVAGVMLSYLVYLSVWALALADIPQAAIYWMAIGLAGLQALWHGWLIRKRERDDCFKAFRLNHWLGFTVFAGIALSYLAA.

The next 9 membrane-spanning stretches (helical) occupy residues Ala19–Phe39, Trp42–Val62, Ala92–Ala112, Ile115–Val135, Met137–Val157, Val161–Thr181, Phe206–Leu226, Ala233–Ile253, and Ala264–Leu284.

Belongs to the UbiA prenyltransferase family. Mg(2+) serves as cofactor.

It is found in the cell inner membrane. The enzyme catalyses all-trans-octaprenyl diphosphate + 4-hydroxybenzoate = 4-hydroxy-3-(all-trans-octaprenyl)benzoate + diphosphate. It participates in cofactor biosynthesis; ubiquinone biosynthesis. In terms of biological role, catalyzes the prenylation of para-hydroxybenzoate (PHB) with an all-trans polyprenyl group. Mediates the second step in the final reaction sequence of ubiquinone-8 (UQ-8) biosynthesis, which is the condensation of the polyisoprenoid side chain with PHB, generating the first membrane-bound Q intermediate 3-octaprenyl-4-hydroxybenzoate. In Polaromonas sp. (strain JS666 / ATCC BAA-500), this protein is 4-hydroxybenzoate octaprenyltransferase.